A 215-amino-acid chain; its full sequence is Guanylate kinase (215 aa).

One can recognise a Guanylate kinase-like domain in the interval 9–187 (GTLYIVSAPS…ALDELSCLVH (179 aa)). Position 16 to 23 (16 to 23 (APSGAGKT)) interacts with ATP.

The protein belongs to the guanylate kinase family.

It is found in the cytoplasm. It catalyses the reaction GMP + ATP = GDP + ADP. Functionally, essential for recycling GMP and indirectly, cGMP. The protein is Guanylate kinase of Chromohalobacter salexigens (strain ATCC BAA-138 / DSM 3043 / CIP 106854 / NCIMB 13768 / 1H11).